The following is a 321-amino-acid chain: Bifunctional methyltransferase/endonuclease (321 aa).

The segment at 1–86 (MLSVDYENFD…PLGSAEKMRR (86 aa)) is probable methylated-DNA--protein-cysteine methyltransferase. The active site involves C61. An endonuclease V region spans residues 87–318 (LIRDGITITN…YDFSTRNTAI (232 aa)). Mg(2+) is bound by residues D145 and D204.

This sequence in the N-terminal section; belongs to the MGMT family. The protein in the C-terminal section; belongs to the endonuclease V family. It depends on Mg(2+) as a cofactor.

Its subcellular location is the cytoplasm. It catalyses the reaction Endonucleolytic cleavage at apurinic or apyrimidinic sites to products with a 5'-phosphate.. Functionally, DNA repair enzyme involved in the repair of deaminated bases. Selectively cleaves double-stranded DNA at the second phosphodiester bond 3' to a deoxyinosine leaving behind the intact lesion on the nicked DNA. In Thermoplasma volcanium (strain ATCC 51530 / DSM 4299 / JCM 9571 / NBRC 15438 / GSS1), this protein is Bifunctional methyltransferase/endonuclease.